A 376-amino-acid polypeptide reads, in one-letter code: MKVLTVFGTRPEAIKMAPLVHALAKDPFFEAKVCVTAQHREMLDQVLKLFSIVPDYDLNIMQPGQGLTEITCRILEGLKPILAEFKPDVVLVHGDTTTTLATSLAAFYQRIPVGHVEAGLRTGDLYSPWPEEANRTLTGHLAMYHFSPTETSRQNLLRENVADSRIFITGNTVIDALLWVRDQVMSSDTLRSELAANYPFIDPDKKMILVTGHRRESFGRGFEEICHALADIATTHQDIQIVYPVHLNPNVREPVNRILGHVKNVILIDPQEYLPFVWLMNHAWLILTDSGGIQEEAPSLGKPVLVMRDTTERPEAVTAGTVRLVGTDKQRIVEEVTRLLKDENEYQTMSRAHNPYGDGQACSRILEALKNNRISL.

Substrate contacts are provided by residues Arg-10, Lys-15, Asp-95, Glu-117, His-213, Gln-271, Phe-276, 290-292, Glu-296, and Arg-313; that span reads SGG.

Belongs to the UDP-N-acetylglucosamine 2-epimerase family. Homodimer.

The protein localises to the cytoplasm. It carries out the reaction UDP-N-acetyl-alpha-D-glucosamine = UDP-N-acetyl-alpha-D-mannosamine. It participates in bacterial outer membrane biogenesis; enterobacterial common antigen biosynthesis. Its function is as follows. Catalyzes the reversible epimerization at C-2 of UDP-N-acetylglucosamine (UDP-GlcNAc) and thereby provides bacteria with UDP-N-acetylmannosamine (UDP-ManNAc), the activated donor of ManNAc residues. This is UDP-N-acetylglucosamine 2-epimerase from Escherichia coli O157:H7.